The sequence spans 471 residues: ATP synthase subunit beta (471 aa).

153–160 is a binding site for ATP; sequence GGAGVGKT.

The protein belongs to the ATPase alpha/beta chains family. F-type ATPases have 2 components, CF(1) - the catalytic core - and CF(0) - the membrane proton channel. CF(1) has five subunits: alpha(3), beta(3), gamma(1), delta(1), epsilon(1). CF(0) has four main subunits: a(1), b(1), b'(1) and c(9-12).

It localises to the cell membrane. The enzyme catalyses ATP + H2O + 4 H(+)(in) = ADP + phosphate + 5 H(+)(out). Produces ATP from ADP in the presence of a proton gradient across the membrane. The catalytic sites are hosted primarily by the beta subunits. The sequence is that of ATP synthase subunit beta from Roseiflexus sp. (strain RS-1).